We begin with the raw amino-acid sequence, 472 residues long: Probable glycine dehydrogenase (decarboxylating) subunit 2 (472 aa).

Residue Lys268 is modified to N6-(pyridoxal phosphate)lysine.

It belongs to the GcvP family. C-terminal subunit subfamily. In terms of assembly, the glycine cleavage system is composed of four proteins: P, T, L and H. In this organism, the P 'protein' is a heterodimer of two subunits. Requires pyridoxal 5'-phosphate as cofactor.

The enzyme catalyses N(6)-[(R)-lipoyl]-L-lysyl-[glycine-cleavage complex H protein] + glycine + H(+) = N(6)-[(R)-S(8)-aminomethyldihydrolipoyl]-L-lysyl-[glycine-cleavage complex H protein] + CO2. Its function is as follows. The glycine cleavage system catalyzes the degradation of glycine. The P protein binds the alpha-amino group of glycine through its pyridoxal phosphate cofactor; CO(2) is released and the remaining methylamine moiety is then transferred to the lipoamide cofactor of the H protein. The protein is Probable glycine dehydrogenase (decarboxylating) subunit 2 of Thermoplasma volcanium (strain ATCC 51530 / DSM 4299 / JCM 9571 / NBRC 15438 / GSS1).